Consider the following 61-residue polypeptide: Large ribosomal subunit protein bL28 (61 aa).

The disordered stretch occupies residues 1 to 26 (MAKDFVTGKHTRFGNTRSHALNHSRR).

The protein belongs to the bacterial ribosomal protein bL28 family.

The protein is Large ribosomal subunit protein bL28 of Pediococcus pentosaceus (strain ATCC 25745 / CCUG 21536 / LMG 10740 / 183-1w).